A 134-amino-acid chain; its full sequence is MSLSRQDIQRLLEEYQLLNDLLASLQAQHATVSELVEELSTALDGVRLLKSEGGERLVHIGAGIFVGGVFEGREVLTPLGAGYYAFLDLENAERIVKERLEEYSKVKTSLEENIEKLTERALQIRQVLERLGLR.

Belongs to the prefoldin subunit alpha family. In terms of assembly, heterohexamer of two alpha and four beta subunits.

The protein resides in the cytoplasm. Functionally, molecular chaperone capable of stabilizing a range of proteins. Seems to fulfill an ATP-independent, HSP70-like function in archaeal de novo protein folding. The polypeptide is Prefoldin subunit alpha (Pyrobaculum calidifontis (strain DSM 21063 / JCM 11548 / VA1)).